Here is a 1692-residue protein sequence, read N- to C-terminus: Adenylate cyclase (1692 aa).

Disordered regions lie at residues 1–22 and 103–142; these read MDQS…FKTG and SLSD…YKEN. The span at 120-132 shows a compositional bias: basic and acidic residues; that stretch reads ESSEKSEVPRDTR. The required for interaction with gpa2 stretch occupies residues 174–195; it reads FTNLTFPEPISDDSDSVEFQRD. Residues 292-380 enclose the Ras-associating domain; it reads KEFFLRVYRD…SDEEINEEDN (89 aa). 21 LRR repeats span residues 430 to 450, 454 to 474, 477 to 498, 503 to 524, 526 to 547, 549 to 570, 572 to 594, 596 to 617, 618 to 639, 660 to 681, 684 to 705, 707 to 729, 730 to 751, 753 to 774, 783 to 805, 807 to 827, 831 to 852, 855 to 876, 878 to 899, 901 to 922, and 930 to 951; these read ELIS…DFME, KLKR…PITA, QLEV…IFSG, SLKE…TRYL, NLTY…ITEL, QLET…IGSL, KLKH…IGLL, NLET…SECP, KLNS…NPSA, NLVY…VIET, NVET…ISAM, NLKY…GKLK, HLVH…VWQV, SLKV…VATS, QLKI…EFVM, TVEE…TALE, CLKV…FFQN, DLKH…STAQ, LLET…EALS, SLRF…KAEK, and QLEY…EDTN. One can recognise a PPM-type phosphatase domain in the interval 995 to 1275; that stretch reads RYGVCGYLSR…KNVLVVIVEL (281 aa). Residues 1332–1469 enclose the Guanylate cyclase domain; it reads AMVFTDIKNS…PVVNRTSRVV (138 aa). Mg(2+) contacts are provided by Asp-1337 and Asp-1380. Mn(2+)-binding residues include Asp-1337 and Asp-1380. Over residues 1585–1597 the composition is skewed to basic and acidic residues; it reads SDSKSVHGEEGGS. Residues 1585–1614 form a disordered region; that stretch reads SDSKSVHGEEGGSGKRSVSSLRNVSPSEST. The segment covering 1600–1614 has biased composition (polar residues); sequence RSVSSLRNVSPSEST.

This sequence belongs to the adenylyl cyclase class-3 family. Interacts (via N-terminus) with gpa2; the interaction is direct and serves to activate adenylate cyclase and cAMP-PKA signaling, to repress sexual development and gluconeogenesis. Interacts with git1. It depends on Mn(2+) as a cofactor.

The protein resides in the cytoplasm. It catalyses the reaction ATP = 3',5'-cyclic AMP + diphosphate. Activated by binding G protein gpa2. Activated by git1. In contrast to yeast cyclase, S.pombe cyclase is not likely to be regulated by RAS proteins. Its function is as follows. Acts in glucose-induced cAMP signaling by catalyzing the synthesis of the second messenger, cAMP to activate PKA signaling and repress sexual development and gluconeogenesis. The sequence is that of Adenylate cyclase from Schizosaccharomyces pombe (strain 972 / ATCC 24843) (Fission yeast).